Here is a 302-residue protein sequence, read N- to C-terminus: 4-hydroxy-tetrahydrodipicolinate synthase (302 aa).

Thr56 provides a ligand contact to pyruvate. Residue Tyr145 is the Proton donor/acceptor of the active site. The Schiff-base intermediate with substrate role is filled by Lys173. Val215 is a binding site for pyruvate.

This sequence belongs to the DapA family. In terms of assembly, homotetramer; dimer of dimers.

The protein localises to the cytoplasm. It carries out the reaction L-aspartate 4-semialdehyde + pyruvate = (2S,4S)-4-hydroxy-2,3,4,5-tetrahydrodipicolinate + H2O + H(+). It functions in the pathway amino-acid biosynthesis; L-lysine biosynthesis via DAP pathway; (S)-tetrahydrodipicolinate from L-aspartate: step 3/4. Functionally, catalyzes the condensation of (S)-aspartate-beta-semialdehyde [(S)-ASA] and pyruvate to 4-hydroxy-tetrahydrodipicolinate (HTPA). The chain is 4-hydroxy-tetrahydrodipicolinate synthase from Prochlorococcus marinus (strain MIT 9515).